The primary structure comprises 147 residues: MATNTMLCLFVISVVLALAFATNKKGDEEPENHSTGIFGKVGRVVTVALAMSSRLGGADATRGGGAVYGGNLKSNQLPNNNWMAPPPPMAIRSAKVYDSKHSPAEYLKKFAQDFRRKTGMHSQRHHEETTLEQEKRVAGAGPDPIHH.

The N-terminal stretch at 1–21 is a signal peptide; it reads MATNTMLCLFVISVVLALAFA. The segment at 21–83 is required for secretion from the host cytoplasm to the host apoplasm; sequence ATNKKGDEEP…SNQLPNNNWM (63 aa). A glycan (N-linked (GlcNAc...) asparagine) is linked at N32. Disordered stretches follow at residues 57 to 86 and 116 to 147; these read GADA…MAPP and RKTG…PIHH. Over residues 125-137 the composition is skewed to basic and acidic residues; it reads HHEETTLEQEKRV. A CLE motif is present at residues 136-147; it reads RVAGAGPDPIHH.

Belongs to the CLV3/ESR signal peptide family. Highly expressed exclusively within the dorsal esophageal gland cell during syncytium formation in host plants.

It localises to the secreted. The protein resides in the host cytoplasm. Its subcellular location is the host extracellular space. The protein localises to the extracellular space. It is found in the apoplast. Its function is as follows. Mimics host plant CLE extracellular signal peptides that regulate cell fate. May play a role in the differentiation or division of feeding cells (syncytia) induced in plant roots during infection. In Globodera rostochiensis (Golden nematode worm), this protein is CLAVATA3/ESR (CLE)-related protein 4C (CLE-4C).